The following is a 261-amino-acid chain: Glutathione S-transferase theta-1 (261 aa).

One can recognise a GST N-terminal domain in the interval 2–101 (GLELYLDLLS…YLSRKYNTPD (100 aa)). Glutathione is bound by residues 72 to 73 (KV) and 85 to 86 (EC). Residues 107–248 (DIKKRAQVDE…LSNIQIDPQL (142 aa)) form the GST C-terminal domain.

The protein belongs to the GST superfamily. Theta family. In terms of assembly, homodimer.

The protein resides in the cytoplasm. It carries out the reaction RX + glutathione = an S-substituted glutathione + a halide anion + H(+). Conjugation of reduced glutathione to a wide number of exogenous and endogenous hydrophobic electrophiles. The sequence is that of Glutathione S-transferase theta-1 (GSTT1) from Gallus gallus (Chicken).